The sequence spans 349 residues: Interferon regulatory factor 2 (349 aa).

The segment at residues 5–113 (RMRMRPWLEE…NAFRVYRMLP (109 aa)) is a DNA-binding region (IRF tryptophan pentad repeat). N6-acetyllysine occurs at positions 75 and 78. The tract at residues 117 to 148 (RPSKKGKKPKTEKEDKVKHIKQEPVESSLGLS) is disordered. Over residues 125-140 (PKTEKEDKVKHIKQEP) the composition is skewed to basic and acidic residues. Lys-137 is covalently cross-linked (Glycyl lysine isopeptide (Lys-Gly) (interchain with G-Cter in SUMO); alternate). Lys-137 is covalently cross-linked (Glycyl lysine isopeptide (Lys-Gly) (interchain with G-Cter in SUMO2); alternate). Lys-166 participates in a covalent cross-link: Glycyl lysine isopeptide (Lys-Gly) (interchain with G-Cter in SUMO). Phosphoserine is present on Ser-225. The span at 228–239 (SSYAESETTDSV) shows a compositional bias: polar residues. Residues 228–251 (SSYAESETTDSVPSDEESAEGRPH) form a disordered region. A Glycyl lysine isopeptide (Lys-Gly) (interchain with G-Cter in SUMO2) cross-link involves residue Lys-260. Lys-293 participates in a covalent cross-link: Glycyl lysine isopeptide (Lys-Gly) (interchain with G-Cter in SUMO). A disordered region spans residues 297–349 (NPVPYNSSWPPFQDLPLSSSMTPASSSSRPDRETRASVIKKTSDITQARVKSC). The span at 314 to 324 (SSSMTPASSSS) shows a compositional bias: low complexity.

This sequence belongs to the IRF family. Interacts with BRD7, IRF2BP1 and IRF2BP2. Interacts with CREBBP in growing cells; the interaction acetylates IRF2 and regulates IRF2-dependent H4 promoter activity. Acetylated by CBP/ p300 during cell-growth. Acetylation on Lys-75 is required for stimulation of H4 promoter activity. In terms of processing, the major sites of sumoylation are Lys-137 and Lys-293. Sumoylation with SUMO1 increases its transcriptional repressor activity on IRF1 and diminishes its ability to activate ISRE and H4 promoter. In terms of tissue distribution, expressed throughout the epithelium of the colon. Also expressed in lamina propria.

It is found in the nucleus. Functionally, specifically binds to the upstream regulatory region of type I IFN and IFN-inducible MHC class I genes (the interferon consensus sequence (ICS)) and represses those genes. Also acts as an activator for several genes including H4 and IL7. Constitutively binds to the ISRE promoter to activate IL7. Involved in cell cycle regulation through binding the site II (HiNF-M) promoter region of H4 and activating transcription during cell growth. Antagonizes IRF1 transcriptional activation. This is Interferon regulatory factor 2 (IRF2) from Homo sapiens (Human).